Reading from the N-terminus, the 246-residue chain is 3-deoxy-manno-octulosonate cytidylyltransferase (246 aa).

This sequence belongs to the KdsB family.

The protein resides in the cytoplasm. The enzyme catalyses 3-deoxy-alpha-D-manno-oct-2-ulosonate + CTP = CMP-3-deoxy-beta-D-manno-octulosonate + diphosphate. It participates in nucleotide-sugar biosynthesis; CMP-3-deoxy-D-manno-octulosonate biosynthesis; CMP-3-deoxy-D-manno-octulosonate from 3-deoxy-D-manno-octulosonate and CTP: step 1/1. The protein operates within bacterial outer membrane biogenesis; lipopolysaccharide biosynthesis. Its function is as follows. Activates KDO (a required 8-carbon sugar) for incorporation into bacterial lipopolysaccharide in Gram-negative bacteria. The polypeptide is 3-deoxy-manno-octulosonate cytidylyltransferase (Bradyrhizobium diazoefficiens (strain JCM 10833 / BCRC 13528 / IAM 13628 / NBRC 14792 / USDA 110)).